The chain runs to 118 residues: Non-specific lipid-transfer protein 2A (118 aa).

The signal sequence occupies residues 1–26 (MARAQLVLVALVAAALLLAGPHTTMA). 4 disulfides stabilise this stretch: Cys-30–Cys-77, Cys-40–Cys-54, Cys-55–Cys-100, and Cys-75–Cys-114.

It belongs to the plant LTP family.

In terms of biological role, plant non-specific lipid-transfer proteins transfer phospholipids as well as galactolipids across membranes. May play a role in wax or cutin deposition in the cell walls of expanding epidermal cells and certain secretory tissues. The chain is Non-specific lipid-transfer protein 2A (LTP2-A) from Oryza sativa subsp. japonica (Rice).